The following is a 291-amino-acid chain: N-acetylmannosamine kinase (291 aa).

ATP contacts are provided by residues 5–12 (AIDIGGTK) and 132–139 (GVGGGVVS). Zn(2+)-binding residues include histidine 156, cysteine 166, cysteine 168, and cysteine 173.

The protein belongs to the ROK (NagC/XylR) family. NanK subfamily. Homodimer.

The enzyme catalyses an N-acyl-D-mannosamine + ATP = an N-acyl-D-mannosamine 6-phosphate + ADP + H(+). Its pathway is amino-sugar metabolism; N-acetylneuraminate degradation; D-fructose 6-phosphate from N-acetylneuraminate: step 2/5. In terms of biological role, catalyzes the phosphorylation of N-acetylmannosamine (ManNAc) to ManNAc-6-P. The sequence is that of N-acetylmannosamine kinase from Shigella flexneri serotype 5b (strain 8401).